Reading from the N-terminus, the 113-residue chain is Small ribosomal subunit protein uS15 (113 aa).

The protein belongs to the universal ribosomal protein uS15 family. As to quaternary structure, part of the 30S ribosomal subunit. Forms a bridge to the 50S subunit in the 70S ribosome, contacting the 23S rRNA.

In terms of biological role, one of the primary rRNA binding proteins, it binds directly to 16S rRNA where it helps nucleate assembly of the platform of the 30S subunit by binding and bridging several RNA helices of the 16S rRNA. Functionally, forms an intersubunit bridge (bridge B4) with the 23S rRNA of the 50S subunit in the ribosome. This Haemophilus influenzae (strain PittEE) protein is Small ribosomal subunit protein uS15.